The sequence spans 483 residues: Regulatory protein ViaA (483 aa).

It belongs to the ViaA family. As to quaternary structure, homodimer. Interacts with RavA.

The protein localises to the cytoplasm. Functionally, component of the RavA-ViaA chaperone complex, which may act on the membrane to optimize the function of some of the respiratory chains. ViaA stimulates the ATPase activity of RavA. This chain is Regulatory protein ViaA, found in Escherichia coli O7:K1 (strain IAI39 / ExPEC).